The primary structure comprises 306 residues: Meiotically up-regulated gene 73 protein (306 aa).

7 helical membrane passes run tyrosine 28–phenylalanine 48, phenylalanine 59–glycine 79, tyrosine 103–valine 123, isoleucine 125–alanine 145, tryptophan 154–leucine 174, phenylalanine 190–leucine 210, and isoleucine 224–methionine 244.

It belongs to the archaeal/bacterial/fungal opsin family.

It localises to the membrane. In terms of biological role, has a role in meiosis. This is Meiotically up-regulated gene 73 protein (mug73) from Schizosaccharomyces pombe (strain 972 / ATCC 24843) (Fission yeast).